The chain runs to 537 residues: Light-independent protochlorophyllide reductase subunit B (537 aa).

D36 is a [4Fe-4S] cluster binding site. D292 acts as the Proton donor in catalysis. 428 to 429 (GL) provides a ligand contact to substrate. The disordered stretch occupies residues 459–483 (TAGETAGQATEAATAPATPGAPLTG).

Belongs to the ChlB/BchB/BchZ family. As to quaternary structure, protochlorophyllide reductase is composed of three subunits; BchL, BchN and BchB. Forms a heterotetramer of two BchB and two BchN subunits. It depends on [4Fe-4S] cluster as a cofactor.

The catalysed reaction is chlorophyllide a + oxidized 2[4Fe-4S]-[ferredoxin] + 2 ADP + 2 phosphate = protochlorophyllide a + reduced 2[4Fe-4S]-[ferredoxin] + 2 ATP + 2 H2O. It functions in the pathway porphyrin-containing compound metabolism; bacteriochlorophyll biosynthesis (light-independent). Functionally, component of the dark-operative protochlorophyllide reductase (DPOR) that uses Mg-ATP and reduced ferredoxin to reduce ring D of protochlorophyllide (Pchlide) to form chlorophyllide a (Chlide). This reaction is light-independent. The NB-protein (BchN-BchB) is the catalytic component of the complex. The sequence is that of Light-independent protochlorophyllide reductase subunit B from Chloroherpeton thalassium (strain ATCC 35110 / GB-78).